We begin with the raw amino-acid sequence, 141 residues long: Nucleoside diphosphate kinase (141 aa).

ATP is bound by residues lysine 11, phenylalanine 59, arginine 87, threonine 93, arginine 104, and asparagine 114. The active-site Pros-phosphohistidine intermediate is the histidine 117.

It belongs to the NDK family. In terms of assembly, homotetramer. Requires Mg(2+) as cofactor.

Its subcellular location is the cytoplasm. It catalyses the reaction a 2'-deoxyribonucleoside 5'-diphosphate + ATP = a 2'-deoxyribonucleoside 5'-triphosphate + ADP. The catalysed reaction is a ribonucleoside 5'-diphosphate + ATP = a ribonucleoside 5'-triphosphate + ADP. Major role in the synthesis of nucleoside triphosphates other than ATP. The ATP gamma phosphate is transferred to the NDP beta phosphate via a ping-pong mechanism, using a phosphorylated active-site intermediate. This chain is Nucleoside diphosphate kinase, found in Vibrio campbellii (strain ATCC BAA-1116).